Reading from the N-terminus, the 428-residue chain is D-amino acid dehydrogenase (428 aa).

3–17 (VVILGSGVVGVASAY) provides a ligand contact to FAD.

The protein belongs to the DadA oxidoreductase family. The cofactor is FAD.

The catalysed reaction is a D-alpha-amino acid + A + H2O = a 2-oxocarboxylate + AH2 + NH4(+). It functions in the pathway amino-acid degradation; D-alanine degradation; NH(3) and pyruvate from D-alanine: step 1/1. In terms of biological role, oxidative deamination of D-amino acids. This Burkholderia pseudomallei (strain K96243) protein is D-amino acid dehydrogenase.